The following is a 482-amino-acid chain: Glutamate--tRNA ligase (482 aa).

The 'HIGH' region motif lies at 9 to 19; that stretch reads PSPTGPIHVGN. Zn(2+) is bound by residues C106, C108, C133, and D135. The 'KMSKS' region motif lies at 250-254; that stretch reads KLSKR. An ATP-binding site is contributed by K253.

This sequence belongs to the class-I aminoacyl-tRNA synthetase family. Glutamate--tRNA ligase type 1 subfamily. In terms of assembly, monomer. Zn(2+) serves as cofactor.

It is found in the cytoplasm. It catalyses the reaction tRNA(Glu) + L-glutamate + ATP = L-glutamyl-tRNA(Glu) + AMP + diphosphate. Functionally, catalyzes the attachment of glutamate to tRNA(Glu) in a two-step reaction: glutamate is first activated by ATP to form Glu-AMP and then transferred to the acceptor end of tRNA(Glu). The polypeptide is Glutamate--tRNA ligase (Symbiobacterium thermophilum (strain DSM 24528 / JCM 14929 / IAM 14863 / T)).